A 186-amino-acid polypeptide reads, in one-letter code: Auxin-responsive protein IAA4 (186 aa).

Positions L18 to L22 match the EAR-like (transcriptional repression) motif. A disordered region spans residues T25–Q62. Residues V38–G51 show a composition bias toward basic and acidic residues. The 88-residue stretch at G88–G175 folds into the PB1 domain.

The protein belongs to the Aux/IAA family. In terms of assembly, homodimers and heterodimers. Interacts with TPL. As to expression, preferentially expressed in stems, leaves and flowers.

The protein localises to the nucleus. In terms of biological role, aux/IAA proteins are short-lived transcriptional factors that function as repressors of early auxin response genes at low auxin concentrations. Repression is thought to result from the interaction with auxin response factors (ARFs), proteins that bind to the auxin-responsive promoter element (AuxRE). Formation of heterodimers with ARF proteins may alter their ability to modulate early auxin response genes expression. This is Auxin-responsive protein IAA4 (IAA4) from Arabidopsis thaliana (Mouse-ear cress).